A 608-amino-acid chain; its full sequence is Altered inheritance of mitochondria protein 9, mitochondrial (608 aa).

The N-terminal 21 residues, methionine 1 to serine 21, are a transit peptide targeting the mitochondrion.

It belongs to the AIM9 family.

It is found in the mitochondrion. This Clavispora lusitaniae (strain ATCC 42720) (Yeast) protein is Altered inheritance of mitochondria protein 9, mitochondrial (AIM9).